The primary structure comprises 210 residues: Protein GrpE (210 aa).

Residues 1 to 71 (MSEKDQSVNN…DTKIKELEKL (71 aa)) are disordered. Over residues 11 to 23 (TEEDFNVETEDNQ) the composition is skewed to acidic residues. Polar residues predominate over residues 24-35 (NDTNIENSVSNT). Low complexity predominate over residues 36–46 (DNSEANASDSE). Over residues 47-60 (NNSEESIKDEESES) the composition is skewed to acidic residues. The span at 61–71 (QDTKIKELEKL) shows a compositional bias: basic and acidic residues.

This sequence belongs to the GrpE family. In terms of assembly, homodimer.

Its subcellular location is the cytoplasm. Participates actively in the response to hyperosmotic and heat shock by preventing the aggregation of stress-denatured proteins, in association with DnaK and GrpE. It is the nucleotide exchange factor for DnaK and may function as a thermosensor. Unfolded proteins bind initially to DnaJ; upon interaction with the DnaJ-bound protein, DnaK hydrolyzes its bound ATP, resulting in the formation of a stable complex. GrpE releases ADP from DnaK; ATP binding to DnaK triggers the release of the substrate protein, thus completing the reaction cycle. Several rounds of ATP-dependent interactions between DnaJ, DnaK and GrpE are required for fully efficient folding. The protein is Protein GrpE of Staphylococcus epidermidis (strain ATCC 35984 / DSM 28319 / BCRC 17069 / CCUG 31568 / BM 3577 / RP62A).